The chain runs to 783 residues: Ubiquitin carboxyl-terminal hydrolase 1 (783 aa).

Disordered regions lie at residues 1 to 22 and 34 to 55; these read MPGVIPSESNGLSRGSPSKKNR and KRALDFTDSQENEEKTSEYKGS. Residues 7-16 are compositionally biased toward polar residues; the sequence is SESNGLSRGS. Phosphoserine is present on residues S16 and S42. A compositionally biased stretch (basic and acidic residues) spans 45-55; that stretch reads NEEKTSEYKGS. S67 is subject to Phosphoserine. In terms of domain architecture, USP spans 81–783; sequence VGLNNLGNTC…TPYLLFYKKL (703 aa). C90 serves as the catalytic Nucleophile. The disordered stretch occupies residues 234–311; sequence EEYQKEEMSD…RKAAGDTLEI (78 aa). 2 stretches are compositionally biased toward basic and acidic residues: residues 250–273 and 284–296; these read DNMRHSEDYKEKLSKGNGKRKSDA and ISKEHQSSEENQR. Phosphoserine is present on S473. The active-site Proton acceptor is H591. The interval 685–722 is disordered; that stretch reads PDKVASTALPENRNSETNNTNGTDESDSNKESSDQTGI. S766 carries the post-translational modification Phosphoserine.

The protein belongs to the peptidase C19 family. Interacts with FANCD2 and PCNA. Interacts with WDR48. Interacts with ATAD5; the interaction regulates USP1-mediated PCNA deubiquitination. Autocatalytic cleavage of USP1 following UV irradiation inactivates it, leading to an increase in ubiquitinated PCNA, recruitment of POLH and translesion synthesis. In terms of processing, ubiquitinated by the CRL2(KLHDC2) complex following autocatalytic cleavage, leading to its degradation: the CRL2(KLHDC2) complex recognizes the diglycine (Gly-Gly) at the C-terminus.

It is found in the nucleus. It carries out the reaction Thiol-dependent hydrolysis of ester, thioester, amide, peptide and isopeptide bonds formed by the C-terminal Gly of ubiquitin (a 76-residue protein attached to proteins as an intracellular targeting signal).. In terms of biological role, negative regulator of DNA damage repair which specifically deubiquitinates monoubiquitinated FANCD2. Also involved in PCNA-mediated translesion synthesis (TLS) by deubiquitinating monoubiquitinated PCNA. Has almost no deubiquitinating activity by itself and requires the interaction with WDR48 to have a high activity. This chain is Ubiquitin carboxyl-terminal hydrolase 1, found in Bos taurus (Bovine).